The following is a 183-amino-acid chain: Peptide deformylase (183 aa).

Residues cysteine 110 and histidine 153 each contribute to the Fe cation site. The active site involves glutamate 154. Fe cation is bound at residue histidine 157.

It belongs to the polypeptide deformylase family. Fe(2+) is required as a cofactor.

It catalyses the reaction N-terminal N-formyl-L-methionyl-[peptide] + H2O = N-terminal L-methionyl-[peptide] + formate. Removes the formyl group from the N-terminal Met of newly synthesized proteins. Requires at least a dipeptide for an efficient rate of reaction. N-terminal L-methionine is a prerequisite for activity but the enzyme has broad specificity at other positions. This is Peptide deformylase from Listeria monocytogenes serotype 4a (strain HCC23).